Consider the following 60-residue polypeptide: Large ribosomal subunit protein bL32 (60 aa).

The tract at residues 1-23 is disordered; that stretch reads MAVPARHTSKAKKNKRRTHYKLT. The segment covering 7-20 has biased composition (basic residues); sequence HTSKAKKNKRRTHY.

It belongs to the bacterial ribosomal protein bL32 family.

This chain is Large ribosomal subunit protein bL32, found in Streptococcus equi subsp. equi (strain 4047).